Consider the following 80-residue polypeptide: uncharacterized protein (80 aa).

Belongs to the BolA/IbaG family.

This is an uncharacterized protein from Buchnera aphidicola subsp. Acyrthosiphon pisum (strain APS) (Acyrthosiphon pisum symbiotic bacterium).